The chain runs to 196 residues: Peptidyl-tRNA hydrolase (196 aa).

Residue tyrosine 17 coordinates tRNA. Residue histidine 22 is the Proton acceptor of the active site. TRNA contacts are provided by phenylalanine 68, asparagine 70, and asparagine 116.

It belongs to the PTH family. As to quaternary structure, monomer.

It is found in the cytoplasm. It carries out the reaction an N-acyl-L-alpha-aminoacyl-tRNA + H2O = an N-acyl-L-amino acid + a tRNA + H(+). In terms of biological role, hydrolyzes ribosome-free peptidyl-tRNAs (with 1 or more amino acids incorporated), which drop off the ribosome during protein synthesis, or as a result of ribosome stalling. Its function is as follows. Catalyzes the release of premature peptidyl moieties from peptidyl-tRNA molecules trapped in stalled 50S ribosomal subunits, and thus maintains levels of free tRNAs and 50S ribosomes. In Yersinia pseudotuberculosis serotype O:1b (strain IP 31758), this protein is Peptidyl-tRNA hydrolase.